A 253-amino-acid chain; its full sequence is MRVDGRAHDQLRPVTITRNYIKHAEGSCLIEVGDTKVICTATLEERVPPFMRGGGKGWITAEYSMLPRATATRNARESSKGKVGGRTMEIQRLIGRALRSVVNLEAMGERTIWLDCDVIQADGGTRTASITGAFVAMVDAMQKLVDSGTWKQLPLNDFLAATSVGVVGEEAVLDLNYKEDSTAIVDMNVVMTGKGKFVELQGTGEDAPFSPEQLQEMISLAKVGIDNLIHSQKEALADVTLSFAQSVAEESHA.

Phosphate contacts are provided by residues Arg-86 and 124 to 126; that span reads GTR.

It belongs to the RNase PH family. In terms of assembly, homohexameric ring arranged as a trimer of dimers.

The enzyme catalyses tRNA(n+1) + phosphate = tRNA(n) + a ribonucleoside 5'-diphosphate. In terms of biological role, phosphorolytic 3'-5' exoribonuclease that plays an important role in tRNA 3'-end maturation. Removes nucleotide residues following the 3'-CCA terminus of tRNAs; can also add nucleotides to the ends of RNA molecules by using nucleoside diphosphates as substrates, but this may not be physiologically important. Probably plays a role in initiation of 16S rRNA degradation (leading to ribosome degradation) during starvation. The sequence is that of Ribonuclease PH from Brevibacillus brevis (strain 47 / JCM 6285 / NBRC 100599).